We begin with the raw amino-acid sequence, 172 residues long: uncharacterized protein (172 aa).

This is an uncharacterized protein from Haemophilus influenzae (strain ATCC 51907 / DSM 11121 / KW20 / Rd).